The primary structure comprises 208 residues: Pyridoxine/pyridoxamine 5'-phosphate oxidase (208 aa).

FMN-binding positions include 55–60, 70–71, Lys76, Lys77, and Gln99; these read RMVLLK and YT. A substrate-binding site is contributed by Lys60. 3 residues coordinate substrate: Tyr117, Arg121, and Ser125. FMN is bound by residues 134–135 and Trp179; that span reads QS. Position 185-187 (185-187) interacts with substrate; it reads RLH. FMN is bound at residue Arg189.

This sequence belongs to the pyridoxamine 5'-phosphate oxidase family. Homodimer. Requires FMN as cofactor.

It catalyses the reaction pyridoxamine 5'-phosphate + O2 + H2O = pyridoxal 5'-phosphate + H2O2 + NH4(+). The enzyme catalyses pyridoxine 5'-phosphate + O2 = pyridoxal 5'-phosphate + H2O2. It participates in cofactor metabolism; pyridoxal 5'-phosphate salvage; pyridoxal 5'-phosphate from pyridoxamine 5'-phosphate: step 1/1. The protein operates within cofactor metabolism; pyridoxal 5'-phosphate salvage; pyridoxal 5'-phosphate from pyridoxine 5'-phosphate: step 1/1. Functionally, catalyzes the oxidation of either pyridoxine 5'-phosphate (PNP) or pyridoxamine 5'-phosphate (PMP) into pyridoxal 5'-phosphate (PLP). The sequence is that of Pyridoxine/pyridoxamine 5'-phosphate oxidase from Brucella ovis (strain ATCC 25840 / 63/290 / NCTC 10512).